Reading from the N-terminus, the 245-residue chain is tRNA (guanine-N(1)-)-methyltransferase (245 aa).

S-adenosyl-L-methionine is bound by residues Gly114 and 134 to 139 (IGDYIL).

The protein belongs to the RNA methyltransferase TrmD family. In terms of assembly, homodimer.

It is found in the cytoplasm. The catalysed reaction is guanosine(37) in tRNA + S-adenosyl-L-methionine = N(1)-methylguanosine(37) in tRNA + S-adenosyl-L-homocysteine + H(+). Its function is as follows. Specifically methylates guanosine-37 in various tRNAs. The polypeptide is tRNA (guanine-N(1)-)-methyltransferase (Listeria monocytogenes serotype 4b (strain CLIP80459)).